Reading from the N-terminus, the 275-residue chain is Membrane protein insertase YidC 2 (275 aa).

The first 21 residues, 1 to 21 (MKKKNIILISVLLGALLLLTG), serve as a signal peptide directing secretion. C22 is lipidated: N-palmitoyl cysteine. Residue C22 is the site of S-diacylglycerol cysteine attachment. 4 helical membrane passes run 48-68 (FVAK…TLLI), 133-153 (QMGC…YYAI), 174-194 (MVLA…SMIG), and 212-232 (IMIL…WAVG).

The protein belongs to the OXA1/ALB3/YidC family. Type 2 subfamily.

The protein localises to the cell membrane. Functionally, required for the insertion and/or proper folding and/or complex formation of integral membrane proteins into the membrane. Involved in integration of membrane proteins that insert both dependently and independently of the Sec translocase complex, as well as at least some lipoproteins. The sequence is that of Membrane protein insertase YidC 2 from Listeria monocytogenes serotype 4b (strain F2365).